A 334-amino-acid chain; its full sequence is Ornithine carbamoyltransferase subunit F (334 aa).

Residues 56-59, Q83, R107, and 134-137 contribute to the carbamoyl phosphate site; these read STRT and HPTQ. L-ornithine contacts are provided by residues N168, D232, and 236 to 237; that span reads SM. Carbamoyl phosphate-binding positions include 274–275 and R320; that span reads CL.

The protein belongs to the aspartate/ornithine carbamoyltransferase superfamily. OTCase family. In terms of assembly, in E.coli strain K12, trimer of identical or non-identical chains are composed of ArgI (I) and/or ArgF (F). The trimer has the following composition: FFI, FFF, FII, III. E.coli strains B and W, which are known to contain only ArgI, produce only a trimer of identical chains (III).

It localises to the cytoplasm. The enzyme catalyses carbamoyl phosphate + L-ornithine = L-citrulline + phosphate + H(+). It functions in the pathway amino-acid biosynthesis; L-arginine biosynthesis; L-arginine from L-ornithine and carbamoyl phosphate: step 1/3. Reversibly catalyzes the transfer of the carbamoyl group from carbamoyl phosphate (CP) to the N(epsilon) atom of ornithine (ORN) to produce L-citrulline, which is a substrate for argininosuccinate synthetase, the enzyme involved in the final step in arginine biosynthesis. The protein is Ornithine carbamoyltransferase subunit F of Escherichia coli (strain K12).